Consider the following 294-residue polypeptide: Phosphoribosylaminoimidazole-succinocarboxamide synthase (294 aa).

Belongs to the SAICAR synthetase family.

It carries out the reaction 5-amino-1-(5-phospho-D-ribosyl)imidazole-4-carboxylate + L-aspartate + ATP = (2S)-2-[5-amino-1-(5-phospho-beta-D-ribosyl)imidazole-4-carboxamido]succinate + ADP + phosphate + 2 H(+). It participates in purine metabolism; IMP biosynthesis via de novo pathway; 5-amino-1-(5-phospho-D-ribosyl)imidazole-4-carboxamide from 5-amino-1-(5-phospho-D-ribosyl)imidazole-4-carboxylate: step 1/2. This Thermoplasma volcanium (strain ATCC 51530 / DSM 4299 / JCM 9571 / NBRC 15438 / GSS1) protein is Phosphoribosylaminoimidazole-succinocarboxamide synthase.